We begin with the raw amino-acid sequence, 180 residues long: Protein SPMIP9 (180 aa).

In terms of assembly, microtubule inner protein component of sperm flagellar doublet microtubules. Testis-specific. Detected in the germ cell lineage at all stages.

The protein resides in the nucleus. Its subcellular location is the cytoplasm. It is found in the cytoskeleton. It localises to the flagellum axoneme. Its function is as follows. Microtubule inner protein (MIP) part of the dynein-decorated doublet microtubules (DMTs) in flagella axoneme. In Homo sapiens (Human), this protein is Protein SPMIP9.